The chain runs to 296 residues: MAPSNLPSVFNATSQDIEMLLAAQCHLGSKNLQVHMENYLWKTRADGVNVLNVGKTWEKIVLAARIIAAIDNPADVCVISARPYGQRAVLKFASHTGATAIAGRFTPGSFTNYITRSFKEPRLIVVTDPRTDAQAIKEASYVNIPVIALTDTDSPTEYVDVAIPTNNKGRHAIGCVWWMLAREVLRLRGTIYSRETPWDVMVDLYFYRDPEAEAEEKVEEEKVPGAEEEGPAAIESGFAATGGDWEAPAAGFAGATGTGWDGAAGDEWGAAPATTEWAASAAPAAASGEAAKETTW.

The disordered stretch occupies residues 245 to 296 (WEAPAAGFAGATGTGWDGAAGDEWGAAPATTEWAASAAPAAASGEAAKETTW). Positions 263-289 (AAGDEWGAAPATTEWAASAAPAAASGE) are enriched in low complexity.

This sequence belongs to the universal ribosomal protein uS2 family. In terms of assembly, component of the small ribosomal subunit. Mature ribosomes consist of a small (40S) and a large (60S) subunit. The 40S subunit contains about 33 different proteins and 1 molecule of RNA (18S). The 60S subunit contains about 49 different proteins and 3 molecules of RNA (25S, 5.8S and 5S). Interacts with RPS21.

The protein resides in the cytoplasm. Its function is as follows. Required for the assembly and/or stability of the 40S ribosomal subunit. Required for the processing of the 20S rRNA-precursor to mature 18S rRNA in a late step of the maturation of 40S ribosomal subunits. In Fusarium vanettenii (strain ATCC MYA-4622 / CBS 123669 / FGSC 9596 / NRRL 45880 / 77-13-4) (Fusarium solani subsp. pisi), this protein is Small ribosomal subunit protein uS2.